We begin with the raw amino-acid sequence, 393 residues long: Probable acetyl-CoA acetyltransferase (393 aa).

Catalysis depends on cysteine 88, which acts as the Acyl-thioester intermediate. Residues histidine 348 and cysteine 378 each act as proton acceptor in the active site.

The protein belongs to the thiolase-like superfamily. Thiolase family.

Its subcellular location is the cytoplasm. It catalyses the reaction 2 acetyl-CoA = acetoacetyl-CoA + CoA. The chain is Probable acetyl-CoA acetyltransferase (yqeF) from Escherichia coli (strain K12).